A 327-amino-acid polypeptide reads, in one-letter code: Tartrate-resistant acid phosphatase type 5 (327 aa).

The signal sequence occupies residues 1–22 (MDTWMVLLGLQILLLPLLAHCT). Fe cation is bound by residues Asp35, Asp73, Tyr76, and Asn112. 2 N-linked (GlcNAc...) asparagine glycosylation sites follow: Asn118 and Asn149. An intrachain disulfide couples Cys163 to Cys221. The Fe cation site is built by His207, His242, and His244.

In terms of assembly, exists either as monomer or, after proteolytic processing, as a dimer of two chains linked by disulfide bond(s). Fe cation serves as cofactor. As to expression, characteristic constituent of osteoclasts and some mononuclear preosteoclasts. Preferentially expressed in skeletal tissues.

It localises to the lysosome. The catalysed reaction is a phosphate monoester + H2O = an alcohol + phosphate. May play a role in the process of bone resorption. The osteoclastic trap acts on nucleotide tri- and diphosphates with higher affinity, compared with other substrates. This is Tartrate-resistant acid phosphatase type 5 (Acp5) from Rattus norvegicus (Rat).